Consider the following 603-residue polypeptide: NADH-ubiquinone oxidoreductase chain 5 (603 aa).

A run of 15 helical transmembrane segments spans residues 4–24 (ISTL…TTLL), 35–55 (ITKT…LLFV), 84–104 (FFSL…MEFS), 121–141 (LLLF…LQLF), 177–197 (IGDM…NSWE), 213–233 (LLGL…HPWL), 241–261 (TPVS…FTLI), 273–293 (VQTS…ICAL), 301–320 (IIAL…IGIN), 325–347 (AFTH…GSII), 366–386 (MPIT…MPFL), 413–433 (LIAV…ALLG), 457–477 (LILG…PHTT), 480–500 (MTMP…GFTV), and 583–603 (LMKL…LIAL).

Belongs to the complex I subunit 5 family. As to quaternary structure, core subunit of respiratory chain NADH dehydrogenase (Complex I) which is composed of 45 different subunits.

The protein localises to the mitochondrion inner membrane. The enzyme catalyses a ubiquinone + NADH + 5 H(+)(in) = a ubiquinol + NAD(+) + 4 H(+)(out). Its function is as follows. Core subunit of the mitochondrial membrane respiratory chain NADH dehydrogenase (Complex I) which catalyzes electron transfer from NADH through the respiratory chain, using ubiquinone as an electron acceptor. Essential for the catalytic activity and assembly of complex I. The chain is NADH-ubiquinone oxidoreductase chain 5 (MT-ND5) from Mammuthus primigenius (Siberian woolly mammoth).